A 222-amino-acid chain; its full sequence is Ribonuclease T (222 aa).

In terms of domain architecture, Exonuclease spans 20–194; sequence VVIDVETAGF…YDTERTAELF (175 aa). Mg(2+) contacts are provided by aspartate 23, glutamate 25, histidine 181, and aspartate 186. The active-site Proton donor/acceptor is the histidine 181.

This sequence belongs to the RNase T family. As to quaternary structure, homodimer. Mg(2+) is required as a cofactor.

Trims short 3' overhangs of a variety of RNA species, leaving a one or two nucleotide 3' overhang. Responsible for the end-turnover of tRNA: specifically removes the terminal AMP residue from uncharged tRNA (tRNA-C-C-A). Also appears to be involved in tRNA biosynthesis. The chain is Ribonuclease T from Shewanella sp. (strain ANA-3).